Here is a 918-residue protein sequence, read N- to C-terminus: MSRFFKGGSSDSDAESVDSSEENRLTSSRLKKQDDSSSEEESSEEESASSSESESSEEESESEESEVEVPKKKAVAASEDSESDSESSEEEEETESEEDSEVSDESESESESESESEEESESEEESDESERSGPSSFLKKPEKEEAKPAGLKFLRGESSEESSDEEEGRRVVKSAKDKRYEEFISCMETIKNAMSSNNWIVVSNEFDHLNKVSQKCKEAGRNPPPYIEFLSALDQKLESADKAFIKSLDAANGRAFNALKQRVRKNNRQFQSDIDRYRKDPEGFMKPAELNEIPKPAGKAGQDEVIVDGVATRGIVAPTEGLGKPEEITPADIFKYLRAIFEARGKKSTDRSEQIRLLEKLSTIAVTDYQRLRVKVALLAVRFDINTGSGQYMPIDQWNAALTELHSILDIFDANPKIVIVEQVEDENEEEEEAIAAAENNNGVIQVQGSVVSFLERLDDEFTRSLQMIDPHTPEYIDRLKDETSLYTLLVRSQGYLERIGVVENTARLIMRRLDRVYYKPEQVIRANEEVAWRSFPPTFDLTITPRATTTTPDILIHSLCVYLYNNGVSLLRTRAMLCHIYHEALQNRFYKARDMLLMSHLQDSVHAADIATQILHNRTMVQIGLCAFRNGMVQETQYALQDISTTGRVKELLGQGIQAPKFGQFTPDQDRLDKQLVLPFHMHINLELLECVYLTCSMLMEIPAMAAASSTASDSRKRVISRPFRRMLEYIDRQLFVGPPENTREYIMQASKALADGEWRRCEEFIHAIKIWSLMPDADKIKQMLSEKIREEGLRTYLLAYAAFYDSVSLEFLATTFDLPVQRVTVIVSRLLSKREIHAALDQVHGAIIFERVEINKLESLTVSLSEKTAQLNEANEKLYEQKTQHTNPQENRRRDKGGSVKRRNERTENRNRSDMN.

Residues 1-174 (MSRFFKGGSS…EEEGRRVVKS (174 aa)) form a disordered region. 5 positions are modified to phosphoserine: serine 10, serine 12, serine 16, serine 19, and serine 20. Composition is skewed to acidic residues over residues 36 to 47 (SSSEEESSEEES), 54 to 67 (ESSEEESESEESEV), and 79 to 128 (EDSE…ESDE). Residue threonine 667 is modified to Phosphothreonine. Residues 681–856 (FHMHINLELL…GAIIFERVEI (176 aa)) enclose the PCI domain. Residues 879-918 (KLYEQKTQHTNPQENRRRDKGGSVKRRNERTENRNRSDMN) form a disordered region. Positions 907–918 (ERTENRNRSDMN) are enriched in basic and acidic residues.

It belongs to the eIF-3 subunit C family. As to quaternary structure, component of the eukaryotic translation initiation factor 3 (eIF-3) complex. The eIF-3 complex appears to include tif32/eif3a, SPAC25G10.08/eif3b, tif33/eif3c, SPBC4C3.07/eif3f, tif35/eif3g and sum1/eif3i. This set of common subunits may also associate exclusively with either moe1/eif3d and int6/eif3e, or with SPAC821.05/eif3h and SPAC1751.03/eif3m. The eIF-3 complex may also include SPAC3A12.13c/eif3j.

Its subcellular location is the cytoplasm. In terms of biological role, component of the eukaryotic translation initiation factor 3 (eIF-3) complex, which is involved in protein synthesis of a specialized repertoire of mRNAs and, together with other initiation factors, stimulates binding of mRNA and methionyl-tRNAi to the 40S ribosome. The eIF-3 complex specifically targets and initiates translation of a subset of mRNAs involved in cell proliferation. In Schizosaccharomyces pombe (strain 972 / ATCC 24843) (Fission yeast), this protein is Eukaryotic translation initiation factor 3 subunit C (nip1).